The primary structure comprises 360 residues: Phosphoserine aminotransferase (360 aa).

Arginine 41 contributes to the L-glutamate binding site. Pyridoxal 5'-phosphate is bound by residues tryptophan 101, threonine 152, aspartate 172, and glutamine 195. Lysine 196 is modified (N6-(pyridoxal phosphate)lysine). 237–238 (NT) serves as a coordination point for pyridoxal 5'-phosphate.

The protein belongs to the class-V pyridoxal-phosphate-dependent aminotransferase family. SerC subfamily. As to quaternary structure, homodimer. Pyridoxal 5'-phosphate is required as a cofactor.

Its subcellular location is the cytoplasm. The enzyme catalyses O-phospho-L-serine + 2-oxoglutarate = 3-phosphooxypyruvate + L-glutamate. The catalysed reaction is 4-(phosphooxy)-L-threonine + 2-oxoglutarate = (R)-3-hydroxy-2-oxo-4-phosphooxybutanoate + L-glutamate. The protein operates within amino-acid biosynthesis; L-serine biosynthesis; L-serine from 3-phospho-D-glycerate: step 2/3. It participates in cofactor biosynthesis; pyridoxine 5'-phosphate biosynthesis; pyridoxine 5'-phosphate from D-erythrose 4-phosphate: step 3/5. Catalyzes the reversible conversion of 3-phosphohydroxypyruvate to phosphoserine and of 3-hydroxy-2-oxo-4-phosphonooxybutanoate to phosphohydroxythreonine. This is Phosphoserine aminotransferase from Burkholderia orbicola (strain MC0-3).